The chain runs to 225 residues: NAD(P)H-quinone oxidoreductase subunit K, chloroplastic (225 aa).

The [4Fe-4S] cluster site is built by C43, C44, C108, and C139.

The protein belongs to the complex I 20 kDa subunit family. In terms of assembly, NDH is composed of at least 16 different subunits, 5 of which are encoded in the nucleus. [4Fe-4S] cluster is required as a cofactor.

The protein resides in the plastid. It localises to the chloroplast thylakoid membrane. It catalyses the reaction a plastoquinone + NADH + (n+1) H(+)(in) = a plastoquinol + NAD(+) + n H(+)(out). The enzyme catalyses a plastoquinone + NADPH + (n+1) H(+)(in) = a plastoquinol + NADP(+) + n H(+)(out). Its function is as follows. NDH shuttles electrons from NAD(P)H:plastoquinone, via FMN and iron-sulfur (Fe-S) centers, to quinones in the photosynthetic chain and possibly in a chloroplast respiratory chain. The immediate electron acceptor for the enzyme in this species is believed to be plastoquinone. Couples the redox reaction to proton translocation, and thus conserves the redox energy in a proton gradient. This Lactuca sativa (Garden lettuce) protein is NAD(P)H-quinone oxidoreductase subunit K, chloroplastic.